The following is a 364-amino-acid chain: GDSL esterase/lipase 7 (364 aa).

The signal sequence occupies residues 1 to 19; it reads MKSLLICLVLLELVWLGNG. Catalysis depends on Ser-37, which acts as the Nucleophile. Asn-236, Asn-237, and Asn-264 each carry an N-linked (GlcNAc...) asparagine glycan. Catalysis depends on residues Asp-329 and His-332. N-linked (GlcNAc...) asparagine glycosylation occurs at Asn-351.

This sequence belongs to the 'GDSL' lipolytic enzyme family.

Its subcellular location is the secreted. In Arabidopsis thaliana (Mouse-ear cress), this protein is GDSL esterase/lipase 7 (GLIP7).